The primary structure comprises 183 residues: Secreted RxLR effector protein 41 (183 aa).

Residues 1–18 (MLGFVTGVLAISAHVIVS) form the signal peptide. Positions 41-65 (RRLRSYETDTASARAEEGTSDIEER) match the RxLR-dEER motif. Asn-88 is a glycosylation site (N-linked (GlcNAc...) asparagine).

The protein belongs to the RxLR effector family.

Its subcellular location is the secreted. The protein resides in the host nucleus. It is found in the host cytoplasm. Secreted effector that dos not suppress the host cell death induced by cell death-inducing proteins. The sequence is that of Secreted RxLR effector protein 41 from Plasmopara viticola (Downy mildew of grapevine).